A 390-amino-acid chain; its full sequence is Probable tRNA sulfurtransferase (390 aa).

The THUMP domain maps to 58-161; the sequence is EAVARRLQRV…DEGAYIYSRI (104 aa). ATP is bound by residues 179–180, 204–205, Arg261, Gly283, and Gln292; these read LI and HF.

This sequence belongs to the ThiI family.

Its subcellular location is the cytoplasm. It catalyses the reaction [ThiI sulfur-carrier protein]-S-sulfanyl-L-cysteine + a uridine in tRNA + 2 reduced [2Fe-2S]-[ferredoxin] + ATP + H(+) = [ThiI sulfur-carrier protein]-L-cysteine + a 4-thiouridine in tRNA + 2 oxidized [2Fe-2S]-[ferredoxin] + AMP + diphosphate. The catalysed reaction is [ThiS sulfur-carrier protein]-C-terminal Gly-Gly-AMP + S-sulfanyl-L-cysteinyl-[cysteine desulfurase] + AH2 = [ThiS sulfur-carrier protein]-C-terminal-Gly-aminoethanethioate + L-cysteinyl-[cysteine desulfurase] + A + AMP + 2 H(+). The protein operates within cofactor biosynthesis; thiamine diphosphate biosynthesis. In terms of biological role, catalyzes the ATP-dependent transfer of a sulfur to tRNA to produce 4-thiouridine in position 8 of tRNAs, which functions as a near-UV photosensor. Also catalyzes the transfer of sulfur to the sulfur carrier protein ThiS, forming ThiS-thiocarboxylate. This is a step in the synthesis of thiazole, in the thiamine biosynthesis pathway. The sulfur is donated as persulfide by IscS. The protein is Probable tRNA sulfurtransferase of Moorella thermoacetica (strain ATCC 39073 / JCM 9320).